We begin with the raw amino-acid sequence, 301 residues long: dTDP-4-dehydrorhamnose reductase (301 aa).

Residues 10–12, Asp-30, 39–40, and 63–65 contribute to the NADH site; these read GQV, DF, and AHT. An NADPH-binding site is contributed by 11–12; it reads QV. Residues 39–40, 63–65, and Tyr-102 contribute to the NADPH site; these read DF and AHT. 104–105 is a dTDP-beta-L-rhamnose binding site; that stretch reads TD. NADH contacts are provided by Tyr-129 and Lys-133. Positions 129 and 133 each coordinate NADPH. Residue Tyr-129 is the Proton donor/acceptor of the active site. Trp-155 is a dTDP-beta-L-rhamnose binding site.

Belongs to the dTDP-4-dehydrorhamnose reductase family. Homodimer. It depends on Mg(2+) as a cofactor.

The catalysed reaction is dTDP-beta-L-rhamnose + NADP(+) = dTDP-4-dehydro-beta-L-rhamnose + NADPH + H(+). It participates in carbohydrate biosynthesis; dTDP-L-rhamnose biosynthesis. The protein operates within bacterial outer membrane biogenesis; LPS O-antigen biosynthesis. Its function is as follows. Involved in the biosynthesis of the dTDP-L-rhamnose which is an important component of lipopolysaccharide (LPS). Catalyzes the reduction of dTDP-6-deoxy-L-lyxo-4-hexulose to yield dTDP-L-rhamnose. RmlD uses NADH and NADPH nearly equally well. This Escherichia coli protein is dTDP-4-dehydrorhamnose reductase.